Reading from the N-terminus, the 99-residue chain is EPIDERMAL PATTERNING FACTOR-like protein 8 (99 aa).

Residues 1 to 35 (MDSSRKYKRCGFGAALFVANIFFSLLSLHCISGAH) form the signal peptide. Intrachain disulfides connect C53-C90, C57-C63, and C60-C92.

This sequence belongs to the plant cysteine rich small secretory peptide family. Epidermal patterning factor subfamily.

The protein resides in the secreted. Controls stomatal patterning. This chain is EPIDERMAL PATTERNING FACTOR-like protein 8, found in Arabidopsis thaliana (Mouse-ear cress).